The following is a 436-amino-acid chain: UDP-N-acetylmuramate--L-alanine ligase (436 aa).

108 to 114 contacts ATP; it reads GAHGKTS.

Belongs to the MurCDEF family.

The protein resides in the cytoplasm. It carries out the reaction UDP-N-acetyl-alpha-D-muramate + L-alanine + ATP = UDP-N-acetyl-alpha-D-muramoyl-L-alanine + ADP + phosphate + H(+). The protein operates within cell wall biogenesis; peptidoglycan biosynthesis. Its function is as follows. Cell wall formation. This is UDP-N-acetylmuramate--L-alanine ligase from Bacillus cereus (strain AH187).